Reading from the N-terminus, the 247-residue chain is Triosephosphate isomerase (247 aa).

Substrate contacts are provided by Asn-10 and Lys-12. His-95 serves as the catalytic Electrophile. The active-site Proton acceptor is Glu-165.

This sequence belongs to the triosephosphate isomerase family. Homodimer.

It carries out the reaction D-glyceraldehyde 3-phosphate = dihydroxyacetone phosphate. It functions in the pathway carbohydrate biosynthesis; gluconeogenesis. The protein operates within carbohydrate degradation; glycolysis; D-glyceraldehyde 3-phosphate from glycerone phosphate: step 1/1. The protein is Triosephosphate isomerase (TPI1) of Yarrowia lipolytica (strain CLIB 122 / E 150) (Yeast).